Here is a 492-residue protein sequence, read N- to C-terminus: Cytochrome P450 monooxygenase ATEG_03631 (492 aa).

A helical membrane pass occupies residues 10–30; it reads FATLNPMVVVAIPVFLFVISL. An N-linked (GlcNAc...) asparagine glycan is attached at asparagine 309. Cysteine 457 provides a ligand contact to heme.

It belongs to the cytochrome P450 family. The cofactor is heme.

It localises to the membrane. The protein operates within secondary metabolite biosynthesis. Its function is as follows. Cytochrome P450 monooxygenase; part of the cluster A that mediates the biosynthesis of azasperpyranones, members of the azaphilone family that exhibit anti-cancer activities. Azasperpyranones are synthesized by 2 clusters, A and B. Cluster A is responsible for the production of the polyhydric phenol moiety while the azaphilonoid scaffold is produced by the cluster B. The non-reducing polyketide synthase ATEG_03629 produces 5-methyl orsellinic acid, which is then reduced to 5-methyl orsellinic aldehyde by the NRPS-like protein ATEG_03630. 5-methyl orsellinic aldehyde is then first hydroxylated by the FAD-dependent monooxygenase ATEG_03635 and subsequently hydroxylated by the cytochrome P450 monooxygenase ATEG_03631 to produce the unstable polyhydric phenol precursor of azasperpyranones. On the other hand, the polyketide synthase ATEG_07659 is responsible for producing the 3,5-dimethyloctadienone moiety from acetyl-CoA, three malonyl-CoA, and two S-adenosyl methionines (SAM). The 3,5-dimethyloctadienone moiety is then loaded onto the SAT domain of ATEG_07661 and extended with four malonyl-CoA and one SAM, which leads to the formation of 2,4-dihydroxy-6-(5,7-dimethyl-2-oxo-trans-3-trans-5-nonadienyl)-3-methylbenzaldehyde (compound 8) after reductive release and aldol condensation. The FAD-dependent monooxygenase ATEG_07662 is the next enzyme in the biosynthesis sequence and hydroxylates the side chain at the benzylic position of compound 8. In Aspergillus nidulans, afoF, the ortholog of the FAD-dependent oxygenase ATEG_07660, is the key enzyme for the biosynthesis of asperfuranone by catalyzing the hydroxylation at C-8 of to prevent the formation of a six-membered ring hemiacetal intermediate and thus facilitating the formation of a five-membered ring to produce asperfuranone. In Aspergillus terreus, ATEG_07660 is probably not functional, which leads to the formation of the six-membered ring hemiacetal intermediate presperpyranone instead of asperfuranone. Finally, ATEG_03636 is involved in the condensation of the polyhydric phenol moiety produced by cluster A and the perasperpyranone precursor produced by cluster B, to yield azasperpyranone A. Further modifications of azasperpyranone A result in the production of derivatives, including azasperpyranone B to F. This chain is Cytochrome P450 monooxygenase ATEG_03631, found in Aspergillus terreus (strain NIH 2624 / FGSC A1156).